The chain runs to 271 residues: Small ribosomal subunit protein uS9m (271 aa).

Residues 1–11 (MFRSLAKLRCF) constitute a mitochondrion transit peptide. The disordered stretch occupies residues 251 to 271 (KVERKKTGQPKARKKYTWVKR). Positions 252 to 271 (VERKKTGQPKARKKYTWVKR) are enriched in basic residues.

Belongs to the universal ribosomal protein uS9 family. In terms of assembly, component of the mitochondrial small ribosomal subunit (mt-SSU). Mature yeast 74S mitochondrial ribosomes consist of a small (37S) and a large (54S) subunit. The 37S small subunit contains a 15S ribosomal RNA (15S mt-rRNA) and at least 32 different proteins. The 54S large subunit contains a 21S rRNA (21S mt-rRNA) and at least 45 different proteins.

The protein localises to the mitochondrion. In terms of biological role, component of the mitochondrial ribosome (mitoribosome), a dedicated translation machinery responsible for the synthesis of mitochondrial genome-encoded proteins, including at least some of the essential transmembrane subunits of the mitochondrial respiratory chain. The mitoribosomes are attached to the mitochondrial inner membrane and translation products are cotranslationally integrated into the membrane. This Schizosaccharomyces pombe (strain 972 / ATCC 24843) (Fission yeast) protein is Small ribosomal subunit protein uS9m (mrps9).